The following is a 727-amino-acid chain: MSPHQTTGQESDNMTVNGENAQASSQYIQSNEEMTDTIATEKKASAAKAAKDPSRPKRKKAKRACYACQRGHLTCGDERPCQRCIKRGFQDACHDGVRKKAKYLHDAPNEALMAGVGATLYNQRNTAQNNVNASNTSPGAPQQITSPNFYNTQQSPDYNGFPQNKTELQDSTVGPDNYASQSPVSPTYQISQGLSTQGLSPSLPQSTSETPSAANPAPGQFNSTFFDPSDPALFNFDLASMNFGNHYGALEFGMLGHMATGVGDTPPSDSGAQRGSIGQNGSGTFGLTGSSFSESPSNQAPYLFSESGMNDWTQTAPVNRRSMYGSNANLVAGNMSDKPHAFAIESAPANFASPASNESPMMTTSSATFEDTTNSGAFNSRQNVPVSQQRQQPVVSTPQLKQQNLNLGSRRRHKNASSIYDSVKDPYSYTSGFHSLTAFIQRRFSPQKTLRIAKALASIRPSFIATTKTLNRDDLIFMEKCFQRTLWEYEDFINACGTPTIVCRRTGEIAAVGKEFSILTGWKKEVLLGKEPNHNVNTGGSSGLMTGSTSRGSYTPRPYSSEVYNSSATATPRTQPVFLAELLDDDSVIEFYEDFAKLAFGDSRGSVMTTCKLLKYKTKAESDILAGSNGEADAGLNGEATSNETNELNGSHTNGATTNGRGQRRWGKGEIAGEAGMNQLGFRDGKVECSYCWTVKRDVFDIPMLIVMNVSCLFLEPLRSRAMTDIN.

The segment covering 1 to 32 (MSPHQTTGQESDNMTVNGENAQASSQYIQSNE) has biased composition (polar residues). The segment at 1–62 (MSPHQTTGQE…PSRPKRKKAK (62 aa)) is disordered. The segment covering 39-55 (ATEKKASAAKAAKDPSR) has biased composition (basic and acidic residues). A DNA-binding region (zn(2)-C6 fungal-type) is located at residues 65–93 (CYACQRGHLTCGDERPCQRCIKRGFQDAC). 3 stretches are compositionally biased toward polar residues: residues 129–213 (NNVN…TPSA), 267–277 (PSDSGAQRGSI), and 361–379 (MMTT…GAFN). Disordered regions lie at residues 129–224 (NNVN…FNST), 264–297 (DTPP…ESPS), 353–399 (SPAS…STPQ), 533–567 (NHNV…YNSS), and 627–666 (GSNG…QRRW). 2 stretches are compositionally biased toward low complexity: residues 380-399 (SRQN…STPQ) and 543-553 (GLMTGSTSRGS). The span at 639–661 (EATSNETNELNGSHTNGATTNGR) shows a compositional bias: polar residues.

This sequence belongs to the ERT1/acuK family.

Its subcellular location is the nucleus. Its function is as follows. Transcription factor which regulates nonfermentable carbon utilization. Activator of gluconeogenetic genes. This chain is Transcription activator of gluconeogenesis TRV_01442, found in Trichophyton verrucosum (strain HKI 0517).